The following is a 104-amino-acid chain: Sweet protein mabinlin-3 (104 aa).

4 disulfides stabilise this stretch: Cys-4–Cys-53, Cys-17–Cys-42, Cys-43–Cys-91, and Cys-55–Cys-99.

The protein belongs to the 2S seed storage albumins family. As to quaternary structure, heterodimer of a small A and a large B chain linked by disulfide bonds.

Functionally, heat stable 2S seed storage protein having sweetness-inducing activity. The chain is Sweet protein mabinlin-3 from Capparis masaikai (Mabinlang).